Reading from the N-terminus, the 634-residue chain is Factor of DNA methylation 5 (634 aa).

A coiled-coil region spans residues 254-469 (IVVDDLANKI…EDTNSALMVK (216 aa)).

Acts in association with FDM3 and FDM4 for RNA-directed DNA methylation (RdDM). The chain is Factor of DNA methylation 5 from Arabidopsis thaliana (Mouse-ear cress).